The following is a 333-amino-acid chain: NADH-quinone oxidoreductase subunit H (333 aa).

8 helical membrane passes run 15 to 35 (FFIF…FVTY), 88 to 108 (FILA…VIPF), 117 to 137 (IGVG…GVVT), 159 to 179 (ISYE…AGSL), 191 to 211 (VWYI…AVAE), 239 to 259 (WAFF…LITV), 274 to 296 (IPGA…WFRV), and 313 to 333 (VLLP…ELFF).

The protein belongs to the complex I subunit 1 family. In terms of assembly, NDH-1 is composed of 14 different subunits. Subunits NuoA, H, J, K, L, M, N constitute the membrane sector of the complex.

Its subcellular location is the cell membrane. The catalysed reaction is a quinone + NADH + 5 H(+)(in) = a quinol + NAD(+) + 4 H(+)(out). NDH-1 shuttles electrons from NADH, via FMN and iron-sulfur (Fe-S) centers, to quinones in the respiratory chain. The immediate electron acceptor for the enzyme in this species is believed to be ubiquinone. Couples the redox reaction to proton translocation (for every two electrons transferred, four hydrogen ions are translocated across the cytoplasmic membrane), and thus conserves the redox energy in a proton gradient. This subunit may bind ubiquinone. In Bacillus thuringiensis subsp. konkukian (strain 97-27), this protein is NADH-quinone oxidoreductase subunit H.